The following is a 280-amino-acid chain: Large ribosomal subunit protein uL2 (280 aa).

2 disordered regions span residues 32 to 54 (SLLV…SRHM) and 221 to 280 (RGMA…DSKK). The segment covering 37–49 (NKSTGGRNNNGRV) has biased composition (polar residues). Residues 232–242 (MGGGEGKSKSG) show a composition bias toward gly residues. Residues 257-280 (KGLKTRKRKKASSKLIVRRRDSKK) show a composition bias toward basic residues.

The protein belongs to the universal ribosomal protein uL2 family. Part of the 50S ribosomal subunit. Forms a bridge to the 30S subunit in the 70S ribosome.

One of the primary rRNA binding proteins. Required for association of the 30S and 50S subunits to form the 70S ribosome, for tRNA binding and peptide bond formation. It has been suggested to have peptidyltransferase activity; this is somewhat controversial. Makes several contacts with the 16S rRNA in the 70S ribosome. The sequence is that of Large ribosomal subunit protein uL2 from Chloroherpeton thalassium (strain ATCC 35110 / GB-78).